Consider the following 257-residue polypeptide: Short chain dehydrogenase helC (257 aa).

The signal sequence occupies residues 1–22; the sequence is MNTAIITGAAQGVGLCIAEALA. V13 contacts NADP(+). The N-linked (GlcNAc...) asparagine glycan is linked to N46. 2 residues coordinate NADP(+): D60 and N87. A glycan (N-linked (GlcNAc...) asparagine) is linked at N110. Residues Y154, K158, I185, and T187 each coordinate NADP(+). Catalysis depends on Y154, which acts as the Proton acceptor. K158 serves as the catalytic Lowers pKa of active site Tyr.

The protein belongs to the short-chain dehydrogenases/reductases (SDR) family.

Its pathway is mycotoxin biosynthesis. Short chain dehydrogenase; part of the gene cluster that mediates the biosynthesis of helvolic acid, an antibacterial nortriterpenoid. Protostadienol synthase helA cyclizes (3S)-oxidosqualene to (17Z)-protosta-17(20),24-dien-3-beta-ol (protostadienol). The synthesis of protostadienol is followed by several steps of monooxygenation, dehydrogenation, and acyl transfer to yield the final helvolic acid. Following the cyclization to the tetracyclic protostadienol by helA, cytochrome P450 monooxygenases helB1-mediated and helB2-mediated oxidation at C-4 and C-16, acyltransferase helD2-dependent acetylation of 16-OH, oxidation of C-21 by cytochrome P450 monooxygenase helB4, and short chain dehydrogenase helC-dependent oxidative decarboxylation yield the fusidane skeleton. This intermediate is further modified in three additional steps mediated by the cytochrome P450 monooxygenase helB3, the acyltransferase helD1, and the 3-ketosteroid 1-dehydrogenase helE to give helvolic acid. Compared with the late stages in the biosynthesis of helvolic acid, enzymes involved in the early stage modifications act in a relatively strict order. The hydroxylation of C-16 by helB1 and subsequent acetylation by helD2 should occur before the helB3-mediated oxidation of C-21. C-4 demethylation in fusidane-type antibiotics proceeds in an unusual manner though it is also achieved by oxidative decarboxylation. The methyl group at C-4 beta position is oxidized by helB1 and subsequently removed by the short chain dehydrogenase helC. The chain is Short chain dehydrogenase helC from Aspergillus fumigatus (strain ATCC MYA-4609 / CBS 101355 / FGSC A1100 / Af293) (Neosartorya fumigata).